Reading from the N-terminus, the 312-residue chain is Methionyl-tRNA formyltransferase (312 aa).

109–112 (SLLP) lines the (6S)-5,6,7,8-tetrahydrofolate pocket.

Belongs to the Fmt family.

The enzyme catalyses L-methionyl-tRNA(fMet) + (6R)-10-formyltetrahydrofolate = N-formyl-L-methionyl-tRNA(fMet) + (6S)-5,6,7,8-tetrahydrofolate + H(+). Its function is as follows. Attaches a formyl group to the free amino group of methionyl-tRNA(fMet). The formyl group appears to play a dual role in the initiator identity of N-formylmethionyl-tRNA by promoting its recognition by IF2 and preventing the misappropriation of this tRNA by the elongation apparatus. This Listeria monocytogenes serotype 4b (strain CLIP80459) protein is Methionyl-tRNA formyltransferase.